A 409-amino-acid polypeptide reads, in one-letter code: Odorant receptor 35a (409 aa).

Residues 1–35 (MVRYVPRFADGQKVKLAWPLAVFRLNHIFWPLDPS) are Cytoplasmic-facing. The helical transmembrane segment at 36–56 (TGKWGRYLDKVLAVAMSLVFM) threads the bilayer. Residues 57–64 (QHNDAELR) lie on the Extracellular side of the membrane. A helical transmembrane segment spans residues 65-85 (YLRFEASNRNLDAFLTGMPTY). Over 86–139 (LILVEAQFRSLHILLHFEKLQKFLEIFYANIYIDPRKEPEMFRKVDGKMIINRL) the chain is Cytoplasmic. A helical membrane pass occupies residues 140-160 (VSAMYGAVISLYLIAPVFSII). Asn161 is a glycosylation site (N-linked (GlcNAc...) asparagine). Topologically, residues 161-177 (NQSKDFLYSMIFPFDSD) are extracellular. The chain crosses the membrane as a helical span at residues 178–198 (PLYIFVPLLLTNVWVGIVIDT). Over 199 to 273 (MMFGETNLLC…QQLEAQYTVR (75 aa)) the chain is Cytoplasmic. A helical membrane pass occupies residues 274–294 (VFIMFAFAAGLLCALSFKAYT). Topologically, residues 295 to 302 (NPMANYIY) are extracellular. A helical transmembrane segment spans residues 303–323 (AIWFGAKTVELLSLGQIGSDL). Residues 324–379 (AFTTDSLSTMYYLTHWEQILQYSTNPSENLRLLKLINLAIEMNSKPFYVTGLKYFR) are Cytoplasmic-facing. A helical transmembrane segment spans residues 380-400 (VSLQAGLKILQASFSYFTFLT). Over 401–409 (SMQRRQMSN) the chain is Extracellular.

The protein belongs to the insect chemoreceptor superfamily. Heteromeric odorant receptor channel (TC 1.A.69) family. Or1a subfamily. As to quaternary structure, interacts with Orco. Complexes exist early in the endomembrane system in olfactory sensory neurons (OSNs), coupling these complexes to the conserved ciliary trafficking pathway. As to expression, expressed in ac3B olfactory sensory neurons in the antenna.

The protein resides in the cell membrane. Odorant receptor which mediates acceptance or avoidance behavior, depending on its substrates. The odorant receptor repertoire encodes a large collection of odor stimuli that vary widely in identity, intensity, and duration. Forms a complex with Orco to form odorant-sensing units, providing sensitive and prolonged odorant signaling and calcium permeability. Involved in the behavioral responses to esters. Involved in the behavioral responses to butanol, pentanol, hexanol, octanol, propyl acetate, and butyl acetate. This is Odorant receptor 35a (Or35a) from Drosophila melanogaster (Fruit fly).